The sequence spans 90 residues: Sec-independent protein translocase protein TatA (90 aa).

The chain crosses the membrane as a helical span at residues methionine 1–glycine 21. Residues glutamate 42–lysine 60 show a composition bias toward basic and acidic residues. Residues glutamate 42 to lysine 90 are disordered. Positions serine 61–threonine 75 are enriched in polar residues.

Belongs to the TatA/E family. In terms of assembly, the Tat system comprises two distinct complexes: a TatABC complex, containing multiple copies of TatA, TatB and TatC subunits, and a separate TatA complex, containing only TatA subunits. Substrates initially bind to the TatABC complex, which probably triggers association of the separate TatA complex to form the active translocon.

The protein resides in the cell membrane. Part of the twin-arginine translocation (Tat) system that transports large folded proteins containing a characteristic twin-arginine motif in their signal peptide across membranes. TatA could form the protein-conducting channel of the Tat system. The polypeptide is Sec-independent protein translocase protein TatA (Saccharopolyspora erythraea (strain ATCC 11635 / DSM 40517 / JCM 4748 / NBRC 13426 / NCIMB 8594 / NRRL 2338)).